A 93-amino-acid polypeptide reads, in one-letter code: Zinc metalloproteinase-disintegrin-like leucurogin (93 aa).

The region spanning 8-93 is the Disintegrin domain; the sequence is PPVCGNELLE…SECPADVGHK (86 aa). Val10, Asn13, Leu15, Glu17, Glu20, and Asp23 together coordinate Ca(2+). 7 disulfides stabilise this stretch: Cys11–Cys40, Cys22–Cys35, Cys24–Cys30, Cys34–Cys57, Cys48–Cys54, Cys53–Cys79, and Cys66–Cys86. The short motif at 72 to 74 is the D/ECD-tripeptide element; the sequence is ECD. Ca(2+) is bound by residues Asp74, Pro75, Glu77, Asp89, and Val90. The segment at 74 to 93 is disordered; the sequence is DPAEHCTGQSSECPADVGHK.

Belongs to the venom metalloproteinase (M12B) family. P-III subfamily. Monomer. Zn(2+) serves as cofactor. Post-translationally, N-glycosylated. Expressed by the venom gland.

The protein resides in the secreted. Snake venom zinc metalloprotease that possesses hemorrhagic activity. The disintegrin-like domain has been expressed and named leucurogin. This recombinant disintegrin is able to inhibit collagen-induced platelet aggregation but not ADP- or arachidonic acid-induced platelet aggregation. Furthermore, it inhibits the adhesion of human fibroblasts to collagen type I. It also reduces adhesion and migration of human fibroblasts and inhibits migration and proliferation of human and mouse melanoma cell lines (BLM, and B16-F10-Nex2). In vitro, it inhibits the vascular structures formation by endothelial cells. In addition, it inhibits the growth of experimental Ehrlich tumor and has anti-angiogenesis effect on the sponge implant model. In vivo, when intraperitoneally injected into mice, it inhibits lung metastasis of B16F10 Nex-2 cells. In the treatment of human melanoma, grafted intradermally in the nude mice flank, it inhibits tumor growth. This chain is Zinc metalloproteinase-disintegrin-like leucurogin, found in Bothrops leucurus (Whitetail lancehead).